Consider the following 269-residue polypeptide: SF-assemblin (269 aa).

Residues Met-1–Ala-23 form a disordered region. Residues Met-1 to Gly-24 are nonhelical region. A rod region spans residues Pro-25–Thr-269. The stretch at Ala-98–Leu-144 forms a coiled coil.

It belongs to the SF-assemblin family.

It is found in the cytoplasm. It localises to the cytoskeleton. Its function is as follows. Major component of the striated microtubule-associated fibers (SMAFs; system-I-fibers). The protein is SF-assemblin of Chlamydomonas moewusii (Chlamydomonas eugametos).